The chain runs to 111 residues: MAQIQFSRGVSEPVVPEVRLTRAKSGNSGTATFRFESPTILDAESTDDITGMYLVDEEGEIVTREVKGKFINGKPTSVEAILIMNSQDEWDRFMRFMERYAQENGLGFSKA.

This sequence belongs to the Psb28 family. Part of the photosystem II complex.

It is found in the cellular thylakoid membrane. This chain is Photosystem II reaction center Psb28 protein, found in Crocosphaera subtropica (strain ATCC 51142 / BH68) (Cyanothece sp. (strain ATCC 51142)).